The chain runs to 348 residues: Putative S-adenosyl-L-methionine-dependent methyltransferase Mb3432 (348 aa).

S-adenosyl-L-methionine-binding positions include Asp171 and 200-201 (DL).

It belongs to the UPF0677 family.

In terms of biological role, exhibits S-adenosyl-L-methionine-dependent methyltransferase activity. This Mycobacterium bovis (strain ATCC BAA-935 / AF2122/97) protein is Putative S-adenosyl-L-methionine-dependent methyltransferase Mb3432.